The following is a 78-amino-acid chain: UPF0349 protein SSP1836 (78 aa).

The protein belongs to the UPF0349 family.

This chain is UPF0349 protein SSP1836, found in Staphylococcus saprophyticus subsp. saprophyticus (strain ATCC 15305 / DSM 20229 / NCIMB 8711 / NCTC 7292 / S-41).